A 383-amino-acid polypeptide reads, in one-letter code: tRNA-specific 2-thiouridylase MnmA (383 aa).

ATP contacts are provided by residues 30–37 (GMSGGVDS) and M56. The interaction with target base in tRNA stretch occupies residues 116–118 (NPD). Catalysis depends on C121, which acts as the Nucleophile. C121 and C218 form a disulfide bridge. G146 lines the ATP pocket. Residues 168–170 (KDQ) form an interaction with tRNA region. C218 (cysteine persulfide intermediate) is an active-site residue. The tract at residues 330–331 (RY) is interaction with tRNA.

This sequence belongs to the MnmA/TRMU family.

The protein localises to the cytoplasm. It catalyses the reaction S-sulfanyl-L-cysteinyl-[protein] + uridine(34) in tRNA + AH2 + ATP = 2-thiouridine(34) in tRNA + L-cysteinyl-[protein] + A + AMP + diphosphate + H(+). Catalyzes the 2-thiolation of uridine at the wobble position (U34) of tRNA, leading to the formation of s(2)U34. The sequence is that of tRNA-specific 2-thiouridylase MnmA from Haemophilus influenzae (strain 86-028NP).